A 1323-amino-acid polypeptide reads, in one-letter code: MAHKGTESKEQIWPYKITIGICAMNRKATSKPMRAIMKKIIDFYGQWVDSFIFPEQVIINEPVENWPLCHCLVSFHSTEFPLEKAIAYVKLRNPYVINNLDRQYDLLDRRTVFKILSDNGIEHPRHGYVIRGRPNEPDTELVEHPDHIEVNGEVFNKPFVEKPISSEDHNVYIYYPSSVGGGSQRLFRKINNRSSWYSPKSEVRKEGSYIYEEFIPADGTDVKVYAVGPFYAHAEARKAPGLDGKVERDSDGKEVRYPVILSNKEKQIAKKIVLAFGQTVCGFDLLRANGKSYVCDVNGFSFVKTSTKYYEDTAKILGNQIVRHYAKSKNWRVPSDMPQPPILDLGLGDDPPMITTPSGKLAELRCVVAVIRHGDRTPKQKMKLIVTDQRFFALFEKYDGYKKHEIKMKKPNQLMEVLELARALVIEKQRDRHQILEKLREGTGEEEIHKSEHDLEVCEEEMKKWEQMRTVLEMYGHFSGINRKVQMKYLKERETKTSDEELRREGPALLLILKWGGELTTAGNMQAEALGRLFRTLYPGIRRTDGKSSPEDTQGLGFLRLHSTYRHDLKIYASDEGRVQTTAAAFAKGLLALEGELTPILMQMVKSANTDGLLDDDCQARLYQTELKRYLHKALQADRDFTPQDYLELNPNGLRAITAAMEFIKNPRKMCHEIAGYVEKMCGVIVEYSQTRPTGSTLYLQESMDLAQRRWNKELREFRRKNKHGEVEFDISKIPDIYDNIKYDMEHNPDLCINNEVEFERMYVCVKNMADIVVPQEYGIKTENKMVIAQRVCTPLLRKIRNDLHRCLENKESEETQTRLDPRASQGIATPFRHVRTRLYFTSESHIHTLMNLIRYGNLCSVDDKKWQRAMNFLSGVTEFNYMTQVVLMVYEDSRKENDEADTGPRFHIEILFSPGLYPCFLTEKERIYETRFNLSTNPKPATSSRSSGRESRDTNDSASSSTEGRRPSIEKVVTVVTPTQLSTPSVTNDDLSISSNAESTAAESTGLVNTTTKTHNDSEDDLNDVESVNLVALDELNNTTKAMADDGKTAKRQRSVTGAEKSMEEGDKPHGEWKGNGVAKSGSQISVGSNEMESNNESMETVGGGKGQWVKDLLDQTKRAMAMNSIREVEPPIVIPTPVPSTTTAVVEDEASERQSRSRRYFPYRFKHHTAQLLTGMSGGGVHMQNRLISTDVLTGKFGDHDNKKNSRKDFGAGTAVLSTAVIARSSSAPRLMTYESEDFSVGEIKRFWPPLRSLETLHDSINLSQFDGFLERLIKGALTPLPSPPKTPLPSALSCDAINKTPTQDEVEKVIGKLAPTSSTD.

26–27 contacts substrate; sequence RK. ATP contacts are provided by residues R109, K162, H169, R188, 212 to 215, and 221 to 223; these read EEFI and DVK. 188 to 189 lines the substrate pocket; it reads RK. Residues K223 and R237 each contribute to the substrate site. ATP-binding positions include D284 and 296–298; that span reads DVN. A substrate-binding site is contributed by 301-304; sequence SFVK. Positions 355–426 are polyphosphoinositide-binding domain; the sequence is TTPSGKLAEL…VLELARALVI (72 aa). Composition is skewed to polar residues over residues 933–947 and 977–992; these read FNLS…SSRS and VTPT…NDDL. Disordered regions lie at residues 933 to 1022, 1043 to 1107, and 1134 to 1155; these read FNLS…SEDD, AMAD…GGGK, and IVIP…ASER. Residues 993-1006 show a composition bias toward low complexity; that stretch reads SISSNAESTAAEST. Positions 1062–1074 are enriched in basic and acidic residues; the sequence is KSMEEGDKPHGEW. Low complexity predominate over residues 1090–1101; the sequence is SNEMESNNESME.

The protein belongs to the histidine acid phosphatase family. VIP1 subfamily.

It localises to the cytoplasm. Its subcellular location is the cytosol. The catalysed reaction is 1D-myo-inositol hexakisphosphate + ATP = 1-diphospho-1D-myo-inositol 2,3,4,5,6-pentakisphosphate + ADP. The enzyme catalyses 5-diphospho-1D-myo-inositol 1,2,3,4,6-pentakisphosphate + ATP + H(+) = 1,5-bis(diphospho)-1D-myo-inositol 2,3,4,6-tetrakisphosphate + ADP. In terms of biological role, bifunctional inositol kinase that acts in concert with the IP6K kinases to synthesize the diphosphate group-containing inositol pyrophosphates diphosphoinositol pentakisphosphate, PP-InsP5, and bis-diphosphoinositol tetrakisphosphate, (PP)2-InsP4. PP-InsP5 and (PP)2-InsP4, also respectively called InsP7 and InsP8, may regulate a variety of cellular processes, including apoptosis, vesicle trafficking, cytoskeletal dynamics, and exocytosis. Phosphorylates inositol hexakisphosphate (InsP6) at position 1 to produce PP-InsP5 which is in turn phosphorylated by IP6Ks to produce (PP)2-InsP4. Alternatively, phosphorylates PP-InsP5 at position 1, produced by IP6Ks from InsP6, to produce (PP)2-InsP4. This Caenorhabditis elegans protein is Inositol hexakisphosphate and diphosphoinositol-pentakisphosphate kinase.